Here is a 484-residue protein sequence, read N- to C-terminus: Folate synthesis bifunctional protein (484 aa).

An HPPK region spans residues 15-141; the sequence is VIALGSNVGN…PFVLAPLVDL (127 aa). The 269-residue stretch at 202-470 folds into the Pterin-binding domain; it reads TYVMGILNLT…NVRDNVDAAR (269 aa). Positions 204-484 are DHPS; that stretch reads VMGILNLTPD…MMTKRFKNVD (281 aa). Asn209 contributes to the Mg(2+) binding site. (7,8-dihydropterin-6-yl)methyl diphosphate contacts are provided by residues Thr249, Asp286, Asn305, Asp378, Lys423, and 458–460; that span reads RVH.

It in the N-terminal section; belongs to the HPPK family. The protein in the C-terminal section; belongs to the DHPS family. Mg(2+) is required as a cofactor. In terms of tissue distribution, expressed exclusively in reproductive tissues.

The protein resides in the cytoplasm. It localises to the cytosol. It carries out the reaction 6-hydroxymethyl-7,8-dihydropterin + ATP = (7,8-dihydropterin-6-yl)methyl diphosphate + AMP + H(+). The enzyme catalyses (7,8-dihydropterin-6-yl)methyl diphosphate + 4-aminobenzoate = 7,8-dihydropteroate + diphosphate. It participates in cofactor biosynthesis; tetrahydrofolate biosynthesis; 2-amino-4-hydroxy-6-hydroxymethyl-7,8-dihydropteridine diphosphate from 7,8-dihydroneopterin triphosphate: step 4/4. The protein operates within cofactor biosynthesis; tetrahydrofolate biosynthesis; 7,8-dihydrofolate from 2-amino-4-hydroxy-6-hydroxymethyl-7,8-dihydropteridine diphosphate and 4-aminobenzoate: step 1/2. Its activity is regulated as follows. Inhibited by sulfanilamide. Catalyzes the first two consecutive steps of tetrahydrofolate biosynthesis. Plays a role in seed stress response and survival. In Arabidopsis thaliana (Mouse-ear cress), this protein is Folate synthesis bifunctional protein.